The following is a 104-amino-acid chain: NADH-quinone oxidoreductase subunit K (104 aa).

3 helical membrane passes run 7–27 (LSHYLTVAAILFTLGTLGIFL), 33–53 (IVILMSVELILLAVNINLVSF), and 67–87 (LLVLTVAAAEAAIGLAILVVF).

The protein belongs to the complex I subunit 4L family. As to quaternary structure, NDH-1 is composed of 14 different subunits. Subunits NuoA, H, J, K, L, M, N constitute the membrane sector of the complex.

Its subcellular location is the cell inner membrane. It catalyses the reaction a quinone + NADH + 5 H(+)(in) = a quinol + NAD(+) + 4 H(+)(out). Functionally, NDH-1 shuttles electrons from NADH, via FMN and iron-sulfur (Fe-S) centers, to quinones in the respiratory chain. The immediate electron acceptor for the enzyme in this species is believed to be ubiquinone. Couples the redox reaction to proton translocation (for every two electrons transferred, four hydrogen ions are translocated across the cytoplasmic membrane), and thus conserves the redox energy in a proton gradient. The chain is NADH-quinone oxidoreductase subunit K from Xanthobacter autotrophicus (strain ATCC BAA-1158 / Py2).